Here is a 787-residue protein sequence, read N- to C-terminus: Protein FAM149A (787 aa).

7 disordered regions span residues Ser-22–Ala-105, Gly-144–Pro-175, Glu-189–Phe-226, Ala-238–Asp-284, Asp-432–Pro-455, Leu-573–Arg-602, and Ala-665–Gly-697. Residues Ser-37–Leu-46 are compositionally biased toward polar residues. Composition is skewed to low complexity over residues Thr-51–Ser-65 and Ser-96–Ala-105. The span at Gly-144–Asn-155 shows a compositional bias: polar residues. The span at Glu-189–Asp-200 shows a compositional bias: acidic residues. Residues Pro-201–Asp-220 are compositionally biased toward basic and acidic residues. Low complexity predominate over residues Ser-239–Ser-250. Polar residues predominate over residues Arg-251–Pro-261. A compositionally biased stretch (low complexity) spans Gly-262–Thr-274.

Belongs to the FAM149 family.

In Mus musculus (Mouse), this protein is Protein FAM149A (Fam149a).